Here is a 671-residue protein sequence, read N- to C-terminus: DNA ligase (671 aa).

NAD(+)-binding positions include 32–36 (DAEYD), 81–82 (SL), and glutamate 113. The N6-AMP-lysine intermediate role is filled by lysine 115. Arginine 136, glutamate 173, lysine 290, and lysine 314 together coordinate NAD(+). Zn(2+) contacts are provided by cysteine 408, cysteine 411, cysteine 426, and cysteine 432. Residues 593-671 (EIDSPFAGKT…EAEMLRLLGS (79 aa)) form the BRCT domain.

The protein belongs to the NAD-dependent DNA ligase family. LigA subfamily. Mg(2+) is required as a cofactor. It depends on Mn(2+) as a cofactor.

It catalyses the reaction NAD(+) + (deoxyribonucleotide)n-3'-hydroxyl + 5'-phospho-(deoxyribonucleotide)m = (deoxyribonucleotide)n+m + AMP + beta-nicotinamide D-nucleotide.. Its function is as follows. DNA ligase that catalyzes the formation of phosphodiester linkages between 5'-phosphoryl and 3'-hydroxyl groups in double-stranded DNA using NAD as a coenzyme and as the energy source for the reaction. It is essential for DNA replication and repair of damaged DNA. This is DNA ligase from Escherichia coli O9:H4 (strain HS).